Consider the following 329-residue polypeptide: Ubiquitin carboxyl-terminal hydrolase isozyme L5 (329 aa).

The UCH catalytic domain maps to 7–225; it reads EWCLMESDPG…IRFNLMAIVS (219 aa). Lys47 is subject to N6-succinyllysine. Cys88 acts as the Nucleophile in catalysis. Position 158 is an N6-acetyllysine (Lys158). The active-site Proton donor is the His164. Position 289 is an N6-succinyllysine (Lys289). The ULD domain occupies 291–319; the sequence is NYLPFIMELLKTLAEHQQLIPLVEKAKEK. An interaction with ADRM1 region spans residues 313 to 329; sequence VEKAKEKQNAKKAQETK.

Belongs to the peptidase C12 family. As to quaternary structure, component of the 19S (PA700) regulatory complex of the 26S proteasome. Interacts with ADRM1 and NFRKB. Component of the INO80 complex; specifically part of a complex module associated with N-terminus of INO80.

The protein resides in the cytoplasm. It is found in the nucleus. The catalysed reaction is Thiol-dependent hydrolysis of ester, thioester, amide, peptide and isopeptide bonds formed by the C-terminal Gly of ubiquitin (a 76-residue protein attached to proteins as an intracellular targeting signal).. With respect to regulation, activated by ADRM1. Inhibited by interaction with NFRKB. Functionally, protease that specifically cleaves 'Lys-48'-linked polyubiquitin chains. Deubiquitinating enzyme associated with the 19S regulatory subunit of the 26S proteasome. Putative regulatory component of the INO80 complex; however is inactive in the INO80 complex and is activated by a transient interaction of the INO80 complex with the proteasome via ADRM1. The protein is Ubiquitin carboxyl-terminal hydrolase isozyme L5 (Uchl5) of Mus musculus (Mouse).